The sequence spans 320 residues: Short-chain dehydrogenase TIC 32 A, chloroplastic (320 aa).

NADP(+) is bound by residues 40–46 (GGTSGIG), 92–93 (DL), Asn119, and Thr140. Residue Ser174 coordinates substrate. The active-site Proton acceptor is Tyr196. The interaction with calmodulin stretch occupies residues 301 to 317 (DTTLADKLWDFSIKLVE).

Belongs to the short-chain dehydrogenases/reductases (SDR) family. Part of the Tic complex. As to expression, expressed in the dehiscence zone of developing pods.

It is found in the plastid. The protein localises to the chloroplast inner membrane. Functionally, involved in protein precursor import into chloroplasts. Maybe involved in pod abscission or dehiscence (pod shatter). The sequence is that of Short-chain dehydrogenase TIC 32 A, chloroplastic from Brassica napus (Rape).